Reading from the N-terminus, the 283-residue chain is Diaminopimelate epimerase (283 aa).

Substrate-binding residues include Asn13, Gln45, and Asn65. Cys74 serves as the catalytic Proton donor. Substrate contacts are provided by residues 75–76 (GN), Asn156, Asn190, and 208–209 (ER). The Proton acceptor role is filled by Cys217. A substrate-binding site is contributed by 218–219 (GS).

Belongs to the diaminopimelate epimerase family. As to quaternary structure, homodimer.

It localises to the cytoplasm. The enzyme catalyses (2S,6S)-2,6-diaminopimelate = meso-2,6-diaminopimelate. It functions in the pathway amino-acid biosynthesis; L-lysine biosynthesis via DAP pathway; DL-2,6-diaminopimelate from LL-2,6-diaminopimelate: step 1/1. Catalyzes the stereoinversion of LL-2,6-diaminopimelate (L,L-DAP) to meso-diaminopimelate (meso-DAP), a precursor of L-lysine and an essential component of the bacterial peptidoglycan. The sequence is that of Diaminopimelate epimerase from Bartonella tribocorum (strain CIP 105476 / IBS 506).